The sequence spans 164 residues: MRVRGRAWKYGDNIDTDVIIPARYLNTSDPKELAKHVLEDLDPEFRSKMKPGDIIVAGENFGCGSSREHAPLAIKAAGVSCVIAKSFARIFYRNAINIGLPILEAPQAVDRIETGDELEVDFSSGEIRNLTKGEVYRANPFPDFIMEIIKAGGLVEWAKRRLKG.

This sequence belongs to the LeuD family. LeuD type 2 subfamily. Heterodimer of LeuC and LeuD.

The catalysed reaction is (2R,3S)-3-isopropylmalate = (2S)-2-isopropylmalate. The protein operates within amino-acid biosynthesis; L-leucine biosynthesis; L-leucine from 3-methyl-2-oxobutanoate: step 2/4. Functionally, catalyzes the isomerization between 2-isopropylmalate and 3-isopropylmalate, via the formation of 2-isopropylmaleate. This chain is 3-isopropylmalate dehydratase small subunit 1 (leuD1), found in Pyrococcus abyssi (strain GE5 / Orsay).